A 310-amino-acid polypeptide reads, in one-letter code: Elongation factor Ts (310 aa).

Residues 80–83 (TDFV) are involved in Mg(2+) ion dislocation from EF-Tu.

Belongs to the EF-Ts family.

It localises to the cytoplasm. In terms of biological role, associates with the EF-Tu.GDP complex and induces the exchange of GDP to GTP. It remains bound to the aminoacyl-tRNA.EF-Tu.GTP complex up to the GTP hydrolysis stage on the ribosome. This Methylocella silvestris (strain DSM 15510 / CIP 108128 / LMG 27833 / NCIMB 13906 / BL2) protein is Elongation factor Ts.